We begin with the raw amino-acid sequence, 239 residues long: MARGCLCCLKYMMFLFNLIFWLCGCGLLGVGIWLSVSQGNFATFSPSFPSLSAANLVIAIGTIVMVTGFLGCLGAIKENKCLLLSFFIVLLVILLAELILLILFFVYMDKVNENAKKDLKEGLLLYHTENNVGLKNAWNIIQAEMRCCGVTDYTDWYPVLGENTVPDRCCMENSQGCGRNATTPLWRTGCYEKVKMWFDDNKHVLGTVGMCILIMQILGMAFSMTLFQHIHRTGKKYDA.

Residues 1-13 lie on the Cytoplasmic side of the membrane; that stretch reads MARGCLCCLKYMM. The helical transmembrane segment at 14-34 threads the bilayer; that stretch reads FLFNLIFWLCGCGLLGVGIWL. The Extracellular segment spans residues 35–55; it reads SVSQGNFATFSPSFPSLSAAN. Residues 56–76 form a helical membrane-spanning segment; sequence LVIAIGTIVMVTGFLGCLGAI. The Cytoplasmic portion of the chain corresponds to 77-85; sequence KENKCLLLS. The chain crosses the membrane as a helical span at residues 86–106; sequence FFIVLLVILLAELILLILFFV. Topologically, residues 107–203 are extracellular; sequence YMDKVNENAK…VKMWFDDNKH (97 aa). The N-linked (GlcNAc...) asparagine glycan is linked to Asn180. A helical transmembrane segment spans residues 204 to 224; sequence VLGTVGMCILIMQILGMAFSM. Over 225-239 the chain is Cytoplasmic; the sequence is TLFQHIHRTGKKYDA.

It belongs to the tetraspanin (TM4SF) family. Found in a complex with GP6. In terms of processing, glycosylated. Expressed in megakaryocytes and platelets (at protein level).

The protein localises to the membrane. The polypeptide is Tetraspanin-9 (TSPAN9) (Homo sapiens (Human)).